The primary structure comprises 338 residues: Anthranilate phosphoribosyltransferase (338 aa).

Residues G78, 81–82, S86, 88–91, 106–114, and S118 each bind 5-phospho-alpha-D-ribose 1-diphosphate; these read GD, NIST, and KHGNRSITS. G78 serves as a coordination point for anthranilate. Mg(2+) is bound at residue S90. Residue N109 coordinates anthranilate. R163 provides a ligand contact to anthranilate. D222 and E223 together coordinate Mg(2+).

It belongs to the anthranilate phosphoribosyltransferase family. Homodimer. The cofactor is Mg(2+).

It catalyses the reaction N-(5-phospho-beta-D-ribosyl)anthranilate + diphosphate = 5-phospho-alpha-D-ribose 1-diphosphate + anthranilate. It participates in amino-acid biosynthesis; L-tryptophan biosynthesis; L-tryptophan from chorismate: step 2/5. Functionally, catalyzes the transfer of the phosphoribosyl group of 5-phosphorylribose-1-pyrophosphate (PRPP) to anthranilate to yield N-(5'-phosphoribosyl)-anthranilate (PRA). In Staphylococcus haemolyticus (strain JCSC1435), this protein is Anthranilate phosphoribosyltransferase.